We begin with the raw amino-acid sequence, 179 residues long: Large ribosomal subunit protein uL5 (179 aa).

The protein belongs to the universal ribosomal protein uL5 family. As to quaternary structure, part of the 50S ribosomal subunit; part of the 5S rRNA/L5/L18/L25 subcomplex. Contacts the 5S rRNA and the P site tRNA. Forms a bridge to the 30S subunit in the 70S ribosome.

In terms of biological role, this is one of the proteins that bind and probably mediate the attachment of the 5S RNA into the large ribosomal subunit, where it forms part of the central protuberance. In the 70S ribosome it contacts protein S13 of the 30S subunit (bridge B1b), connecting the 2 subunits; this bridge is implicated in subunit movement. Contacts the P site tRNA; the 5S rRNA and some of its associated proteins might help stabilize positioning of ribosome-bound tRNAs. The chain is Large ribosomal subunit protein uL5 from Rickettsia peacockii (strain Rustic).